The following is a 573-amino-acid chain: Formate--tetrahydrofolate ligase 3 (573 aa).

ATP is bound at residue 66-73; the sequence is TPLGEGKT.

Belongs to the formate--tetrahydrofolate ligase family.

The catalysed reaction is (6S)-5,6,7,8-tetrahydrofolate + formate + ATP = (6R)-10-formyltetrahydrofolate + ADP + phosphate. Its pathway is one-carbon metabolism; tetrahydrofolate interconversion. This Rubrobacter xylanophilus (strain DSM 9941 / JCM 11954 / NBRC 16129 / PRD-1) protein is Formate--tetrahydrofolate ligase 3.